We begin with the raw amino-acid sequence, 260 residues long: Circadian clock-controlled protein daywake (260 aa).

An N-terminal signal peptide occupies residues Met1 to Ala25.

This sequence belongs to the TO family. Epidermis of newly eclosed adults.

Functionally, component of the circadian clock or downstream effector of clock function. Required for suppressing daytime sleep (siesta) under ambient environmental temperatures. Part of a heat avoidance mechanism that modulates daytime sleep behavior under different environmental temperatures to minimize the risk of heat exposure. Under cooler ambient temperatures, suppresses daytime sleep (siesta) and thus allows for longer periods of daytime activity. The protein is Circadian clock-controlled protein daywake of Drosophila melanogaster (Fruit fly).